Reading from the N-terminus, the 72-residue chain is Translation initiation factor IF-1 2 (72 aa).

In terms of domain architecture, S1-like spans methionine 1–lysine 72.

It belongs to the IF-1 family. Component of the 30S ribosomal translation pre-initiation complex which assembles on the 30S ribosome in the order IF-2 and IF-3, IF-1 and N-formylmethionyl-tRNA(fMet); mRNA recruitment can occur at any time during PIC assembly.

The protein localises to the cytoplasm. Its function is as follows. One of the essential components for the initiation of protein synthesis. Stabilizes the binding of IF-2 and IF-3 on the 30S subunit to which N-formylmethionyl-tRNA(fMet) subsequently binds. Helps modulate mRNA selection, yielding the 30S pre-initiation complex (PIC). Upon addition of the 50S ribosomal subunit IF-1, IF-2 and IF-3 are released leaving the mature 70S translation initiation complex. The protein is Translation initiation factor IF-1 2 of Symbiobacterium thermophilum (strain DSM 24528 / JCM 14929 / IAM 14863 / T).